Here is a 99-residue protein sequence, read N- to C-terminus: NADH-quinone oxidoreductase subunit K (99 aa).

3 helical membrane-spanning segments follow: residues 3–23 (PANY…GVLV), 28–48 (IVVF…LVTF), and 59–79 (VMAF…LAII).

This sequence belongs to the complex I subunit 4L family. As to quaternary structure, NDH-1 is composed of 14 different subunits. Subunits NuoA, H, J, K, L, M, N constitute the membrane sector of the complex.

The protein resides in the cell membrane. The enzyme catalyses a quinone + NADH + 5 H(+)(in) = a quinol + NAD(+) + 4 H(+)(out). NDH-1 shuttles electrons from NADH, via FMN and iron-sulfur (Fe-S) centers, to quinones in the respiratory chain. The immediate electron acceptor for the enzyme in this species is believed to be a menaquinone. Couples the redox reaction to proton translocation (for every two electrons transferred, four hydrogen ions are translocated across the cytoplasmic membrane), and thus conserves the redox energy in a proton gradient. In Frankia alni (strain DSM 45986 / CECT 9034 / ACN14a), this protein is NADH-quinone oxidoreductase subunit K.